Reading from the N-terminus, the 100-residue chain is High mobility group protein C (100 aa).

The segment at residues 12 to 80 (PKRPLSAFFL…KYEKDMQAYE (69 aa)) is a DNA-binding region (HMG box). Positions 81-100 (KKYGKPEKQKKIKKNKKGSK) are disordered. The span at 90 to 100 (KKIKKNKKGSK) shows a compositional bias: basic residues.

The protein resides in the nucleus. Its subcellular location is the chromosome. This Tetrahymena thermophila protein is High mobility group protein C.